The chain runs to 211 residues: Claudin-7 (211 aa).

Residues 1–7 (MANSGLQ) are Cytoplasmic-facing. Residues 8–28 (LLGFSMAMLGWVGLIASTAIP) form a helical membrane-spanning segment. Residues 29–81 (QWQMSSYAGDNIITAQAMYKGLWMECVTQSTGMMSCKMYDSVLALPAATQATR) lie on the Extracellular side of the membrane. The helical transmembrane segment at 82 to 102 (ALMIVSLVLGFLAMFVATMGM) threads the bilayer. Topologically, residues 103–119 (KCTRCGGDDKVKKARIA) are cytoplasmic. A helical membrane pass occupies residues 120–140 (MTGGIIFIVAGLAALVACSWI). At 141–160 (GHQIVTDFYNPLTPMNIKYE) the chain is on the extracellular side. The chain crosses the membrane as a helical span at residues 161-181 (FGPAIFIGWAGSALVLLGGAL). Over 182–211 (LSCSCPGSESKAAYRAPRSYPKSNSSKEYV) the chain is Cytoplasmic. Residues 210 to 211 (YV) form an interactions with TJP1, TJP2 and TJP3 region.

Belongs to the claudin family. In terms of assembly, directly interacts with TJP1/ZO-1, TJP2/ZO-2 and TJP3/ZO-3. The phosphorylated form interacts with EPCAM. Post-translationally, phosphorylated.

It is found in the cell membrane. Its subcellular location is the basolateral cell membrane. The protein resides in the cell junction. It localises to the tight junction. Its function is as follows. Plays a major role in tight junction-specific obliteration of the intercellular space. The sequence is that of Claudin-7 (Cldn7) from Rattus norvegicus (Rat).